We begin with the raw amino-acid sequence, 93 residues long: Antitoxin EndoAI (93 aa).

Belongs to the MazE/EndoAI family. In terms of assembly, homodimer, forms a heterohexamer composed of alternating toxin and antitoxin homodimers which inhibits the toxin's endoribonuclease activity. Antitoxin prevents RNA binding to the endoribonuclease.

Functionally, antitoxin component of a type II toxin-antitoxin (TA) system. Antitoxin that directly inhibits activity of EndoA in vitro. Upon expression in E.coli counteracts inhibitory effect of endoribonuclease EndoA. The EndoA-EndoAI complex does not seem to bind its own promoter. The chain is Antitoxin EndoAI from Bacillus subtilis (strain 168).